A 167-amino-acid polypeptide reads, in one-letter code: Outer envelope pore protein 21A, chloroplastic (167 aa).

Topologically, residues 1–21 are cytoplasmic; sequence METSLRYATNSRSLKIHAKEK. Residues 22-31 form a beta stranded membrane-spanning segment; it reads FPVNSKTRLQ. The Chloroplast intermembrane segment spans residues 32 to 55; it reads LHGELDTGAGVPSYFCAMIRYFFH. The beta stranded transmembrane segment at 56-65 threads the bilayer; sequence EASTNLGVGL. Over 66–71 the chain is Cytoplasmic; sequence HYDKRE. The beta stranded transmembrane segment at 72 to 81 threads the bilayer; that stretch reads KLRCLVRGKK. Topologically, residues 82-87 are chloroplast intermembrane; that stretch reads KFPVIT. A beta stranded membrane pass occupies residues 88 to 97; that stretch reads DEVVTFNIKG. The Cytoplasmic portion of the chain corresponds to 98–110; it reads RCDFDQDLVQRNA. A beta stranded membrane pass occupies residues 111-120; the sequence is KGAAEFDWNI. At 121 to 127 the chain is on the chloroplast intermembrane side; the sequence is WKFQKDQ. The beta stranded transmembrane segment at 128–137 threads the bilayer; that stretch reads DLRLRIGYEM. Residues 138-142 lie on the Cytoplasmic side of the membrane; sequence FEKVP. Residues 143–152 traverse the membrane as a beta stranded segment; it reads YMQIRENNWT. Residues 153–158 are Chloroplast intermembrane-facing; sequence FNTNLK. Residues 159 to 167 form a beta stranded membrane-spanning segment; sequence GKWNVRYDL.

Belongs to the plastid outer envelope porin OEP21 (TC 1.B.29) family.

The protein localises to the plastid. It localises to the etioplast membrane. It is found in the chloroplast outer membrane. Voltage-dependent rectifying anion channel that facilitates the translocation between chloroplast and cytoplasm of phosphorylated carbohydrates such as triosephosphate, 3-phosphoglycerate and inorganic phosphate (Pi) depending of ATP to triosephosphate ratio in the plastidial intermembrane space; in high triosephosphate/ATP conditions (e.g. photosynthesis), export of triosphosphate from chloroplast (outward rectifying channels), but in high ATP/triosephosphate conditions (e.g. dark phase), import of phosphosolutes (inward rectifying channels). The protein is Outer envelope pore protein 21A, chloroplastic (OEP21A) of Arabidopsis thaliana (Mouse-ear cress).